The primary structure comprises 1995 residues: uncharacterized protein (1995 aa).

A run of 7 helical transmembrane segments spans residues 31 to 51 (NYTE…EFFK), 53 to 73 (FFSF…PDIA), 106 to 126 (LVIF…ILPT), 157 to 177 (FLWL…WLSL), 212 to 232 (IFLL…PFIS), 254 to 274 (FLLI…SLLQ), and 307 to 327 (ILNF…IPYY). 2 disordered regions span residues 1418–1441 (SLKK…HQFS) and 1848–1883 (DLRW…KTNP). 2 stretches are compositionally biased toward basic residues: residues 1422-1441 (SQIK…HQFS) and 1853-1863 (PSSRTKQKRKD).

The protein belongs to the ycf78 family.

It is found in the plastid. The protein localises to the chloroplast membrane. Functionally, essential for cell growth. May be involved in binding chloroplast DNA to either the chloroplast envelope or the thylakoid membrane. This is an uncharacterized protein from Chlamydomonas reinhardtii (Chlamydomonas smithii).